A 464-amino-acid chain; its full sequence is ATP synthase subunit beta (464 aa).

154-161 (GGAGVGKT) contacts ATP.

This sequence belongs to the ATPase alpha/beta chains family. As to quaternary structure, F-type ATPases have 2 components, CF(1) - the catalytic core - and CF(0) - the membrane proton channel. CF(1) has five subunits: alpha(3), beta(3), gamma(1), delta(1), epsilon(1). CF(0) has three main subunits: a(1), b(2) and c(9-12). The alpha and beta chains form an alternating ring which encloses part of the gamma chain. CF(1) is attached to CF(0) by a central stalk formed by the gamma and epsilon chains, while a peripheral stalk is formed by the delta and b chains.

It localises to the cell inner membrane. The catalysed reaction is ATP + H2O + 4 H(+)(in) = ADP + phosphate + 5 H(+)(out). Functionally, produces ATP from ADP in the presence of a proton gradient across the membrane. The catalytic sites are hosted primarily by the beta subunits. The polypeptide is ATP synthase subunit beta (Blochmanniella floridana).